The following is a 496-amino-acid chain: Membrane-bound lytic murein transglycosylase F (496 aa).

A signal peptide spans 1 to 29 (MFFRPDFRPRCAKWLIATGLFLMLGACVE). The interval 30–267 (KPTTLERVKE…RLKDRYYGHV (238 aa)) is non-LT domain. Residues 268 to 496 (DVLGYVGAYT…SGSSPDKPAL (229 aa)) are LT domain. Residue Glu314 is part of the active site. The disordered stretch occupies residues 464 to 496 (VADGNLHVPGVDKTQPPAPPAPASGSSPDKPAL). The span at 486-496 (ASGSSPDKPAL) shows a compositional bias: low complexity.

The protein in the N-terminal section; belongs to the bacterial solute-binding protein 3 family. This sequence in the C-terminal section; belongs to the transglycosylase Slt family.

Its subcellular location is the cell outer membrane. The enzyme catalyses Exolytic cleavage of the (1-&gt;4)-beta-glycosidic linkage between N-acetylmuramic acid (MurNAc) and N-acetylglucosamine (GlcNAc) residues in peptidoglycan, from either the reducing or the non-reducing ends of the peptidoglycan chains, with concomitant formation of a 1,6-anhydrobond in the MurNAc residue.. Murein-degrading enzyme that degrades murein glycan strands and insoluble, high-molecular weight murein sacculi, with the concomitant formation of a 1,6-anhydromuramoyl product. Lytic transglycosylases (LTs) play an integral role in the metabolism of the peptidoglycan (PG) sacculus. Their lytic action creates space within the PG sacculus to allow for its expansion as well as for the insertion of various structures such as secretion systems and flagella. The polypeptide is Membrane-bound lytic murein transglycosylase F (Pseudomonas savastanoi pv. phaseolicola (strain 1448A / Race 6) (Pseudomonas syringae pv. phaseolicola (strain 1448A / Race 6))).